The chain runs to 419 residues: Serine hydroxymethyltransferase (419 aa).

Residues Leu118 and 122–124 (GHL) each bind (6S)-5,6,7,8-tetrahydrofolate. The residue at position 227 (Lys227) is an N6-(pyridoxal phosphate)lysine.

Belongs to the SHMT family. In terms of assembly, homodimer. Requires pyridoxal 5'-phosphate as cofactor.

It is found in the cytoplasm. The enzyme catalyses (6R)-5,10-methylene-5,6,7,8-tetrahydrofolate + glycine + H2O = (6S)-5,6,7,8-tetrahydrofolate + L-serine. It participates in one-carbon metabolism; tetrahydrofolate interconversion. Its pathway is amino-acid biosynthesis; glycine biosynthesis; glycine from L-serine: step 1/1. In terms of biological role, catalyzes the reversible interconversion of serine and glycine with tetrahydrofolate (THF) serving as the one-carbon carrier. This reaction serves as the major source of one-carbon groups required for the biosynthesis of purines, thymidylate, methionine, and other important biomolecules. Also exhibits THF-independent aldolase activity toward beta-hydroxyamino acids, producing glycine and aldehydes, via a retro-aldol mechanism. This Chloroflexus aurantiacus (strain ATCC 29364 / DSM 637 / Y-400-fl) protein is Serine hydroxymethyltransferase.